The following is a 1603-amino-acid chain: Pentafunctional AROM polypeptide (1603 aa).

The 3-dehydroquinate synthase stretch occupies residues 1–384 (MGVPTKISIL…YEPRASTVSN (384 aa)). NAD(+)-binding positions include 44–46 (DTN), 81–84 (ESSK), 114–116 (GGV), and D119. Residue R130 participates in 7-phospho-2-dehydro-3-deoxy-D-arabino-heptonate binding. 139–140 (TT) contacts NAD(+). 7-phospho-2-dehydro-3-deoxy-D-arabino-heptonate-binding residues include D146 and K152. Position 161 (K161) interacts with NAD(+). N162 contributes to the 7-phospho-2-dehydro-3-deoxy-D-arabino-heptonate binding site. NAD(+) contacts are provided by residues 179-182 (FLNT) and N190. E194 provides a ligand contact to Zn(2+). 7-phospho-2-dehydro-3-deoxy-D-arabino-heptonate-binding positions include 194 to 197 (EVIK) and K250. The active-site Proton acceptor; for 3-dehydroquinate synthase activity is E260. 7-phospho-2-dehydro-3-deoxy-D-arabino-heptonate is bound by residues 264-268 (RNLLN) and H271. Residue H271 participates in Zn(2+) binding. H275 acts as the Proton acceptor; for 3-dehydroquinate synthase activity in catalysis. Positions 287 and 356 each coordinate 7-phospho-2-dehydro-3-deoxy-D-arabino-heptonate. H287 contributes to the Zn(2+) binding site. The EPSP synthase stretch occupies residues 397–842 (VYPGFPKSLN…WNTLAQTFKV (446 aa)). C824 (for EPSP synthase activity) is an active-site residue. The tract at residues 872 to 1064 (AASIFIIGMR…RRKENTFFVS (193 aa)) is shikimate kinase. Residue 879–886 (GMRGAGKT) participates in ATP binding. The interval 1065-1285 (LTFPDLTPAS…AAPGQLSARE (221 aa)) is 3-dehydroquinase. The Proton acceptor; for 3-dehydroquinate dehydratase activity role is filled by H1188. The active-site Schiff-base intermediate with substrate; for 3-dehydroquinate dehydratase activity is the K1216. The shikimate dehydrogenase stretch occupies residues 1298 to 1603 (AKKFAVIGKP…GVSSSDDTIS (306 aa)).

It in the N-terminal section; belongs to the sugar phosphate cyclases superfamily. Dehydroquinate synthase family. This sequence in the 2nd section; belongs to the EPSP synthase family. The protein in the 3rd section; belongs to the shikimate kinase family. In the 4th section; belongs to the type-I 3-dehydroquinase family. It in the C-terminal section; belongs to the shikimate dehydrogenase family. Homodimer. Requires Zn(2+) as cofactor.

Its subcellular location is the cytoplasm. It catalyses the reaction 7-phospho-2-dehydro-3-deoxy-D-arabino-heptonate = 3-dehydroquinate + phosphate. The enzyme catalyses 3-dehydroquinate = 3-dehydroshikimate + H2O. It carries out the reaction shikimate + NADP(+) = 3-dehydroshikimate + NADPH + H(+). The catalysed reaction is shikimate + ATP = 3-phosphoshikimate + ADP + H(+). It catalyses the reaction 3-phosphoshikimate + phosphoenolpyruvate = 5-O-(1-carboxyvinyl)-3-phosphoshikimate + phosphate. Its pathway is metabolic intermediate biosynthesis; chorismate biosynthesis; chorismate from D-erythrose 4-phosphate and phosphoenolpyruvate: step 2/7. It functions in the pathway metabolic intermediate biosynthesis; chorismate biosynthesis; chorismate from D-erythrose 4-phosphate and phosphoenolpyruvate: step 3/7. It participates in metabolic intermediate biosynthesis; chorismate biosynthesis; chorismate from D-erythrose 4-phosphate and phosphoenolpyruvate: step 4/7. The protein operates within metabolic intermediate biosynthesis; chorismate biosynthesis; chorismate from D-erythrose 4-phosphate and phosphoenolpyruvate: step 5/7. Its pathway is metabolic intermediate biosynthesis; chorismate biosynthesis; chorismate from D-erythrose 4-phosphate and phosphoenolpyruvate: step 6/7. Its function is as follows. The AROM polypeptide catalyzes 5 consecutive enzymatic reactions in prechorismate polyaromatic amino acid biosynthesis. This is Pentafunctional AROM polypeptide from Paracoccidioides brasiliensis (strain Pb03).